Consider the following 179-residue polypeptide: Large ribosomal subunit protein uL5 (179 aa).

It belongs to the universal ribosomal protein uL5 family. In terms of assembly, part of the 50S ribosomal subunit; part of the 5S rRNA/L5/L18/L25 subcomplex. Contacts the 5S rRNA and the P site tRNA. Forms a bridge to the 30S subunit in the 70S ribosome.

Its function is as follows. This is one of the proteins that bind and probably mediate the attachment of the 5S RNA into the large ribosomal subunit, where it forms part of the central protuberance. In the 70S ribosome it contacts protein S13 of the 30S subunit (bridge B1b), connecting the 2 subunits; this bridge is implicated in subunit movement. Contacts the P site tRNA; the 5S rRNA and some of its associated proteins might help stabilize positioning of ribosome-bound tRNAs. This is Large ribosomal subunit protein uL5 from Polaromonas naphthalenivorans (strain CJ2).